A 42-amino-acid polypeptide reads, in one-letter code: Photosystem II reaction center protein J (42 aa).

A helical membrane pass occupies residues 10 to 30 (IPLWLIGTVVGSLAIGLLAIF).

It belongs to the PsbJ family. As to quaternary structure, PSII is composed of 1 copy each of membrane proteins PsbA, PsbB, PsbC, PsbD, PsbE, PsbF, PsbH, PsbI, PsbJ, PsbK, PsbL, PsbM, PsbT, PsbX, PsbY, PsbZ, Psb30/Ycf12, at least 3 peripheral proteins of the oxygen-evolving complex and a large number of cofactors. It forms dimeric complexes.

It localises to the plastid. The protein resides in the chloroplast thylakoid membrane. In terms of biological role, one of the components of the core complex of photosystem II (PSII). PSII is a light-driven water:plastoquinone oxidoreductase that uses light energy to abstract electrons from H(2)O, generating O(2) and a proton gradient subsequently used for ATP formation. It consists of a core antenna complex that captures photons, and an electron transfer chain that converts photonic excitation into a charge separation. The chain is Photosystem II reaction center protein J from Stigeoclonium helveticum (Green alga).